The primary structure comprises 454 residues: Glutamyl-tRNA reductase (454 aa).

Substrate contacts are provided by residues 49 to 52 (TCNR), serine 109, 114 to 116 (ETQ), and glutamine 120. The active-site Nucleophile is cysteine 50. Residue 189 to 194 (GAGKMS) participates in NADP(+) binding. Over residues 432–442 (DHAEQSWKEGQ) the composition is skewed to basic and acidic residues. The interval 432–454 (DHAEQSWKEGQRPSLNQGMALRT) is disordered.

The protein belongs to the glutamyl-tRNA reductase family. As to quaternary structure, homodimer.

It carries out the reaction (S)-4-amino-5-oxopentanoate + tRNA(Glu) + NADP(+) = L-glutamyl-tRNA(Glu) + NADPH + H(+). Its pathway is porphyrin-containing compound metabolism; protoporphyrin-IX biosynthesis; 5-aminolevulinate from L-glutamyl-tRNA(Glu): step 1/2. Its function is as follows. Catalyzes the NADPH-dependent reduction of glutamyl-tRNA(Glu) to glutamate 1-semialdehyde (GSA). The chain is Glutamyl-tRNA reductase from Shouchella clausii (strain KSM-K16) (Alkalihalobacillus clausii).